A 154-amino-acid chain; its full sequence is uncharacterized protein (154 aa).

Transmembrane regions (helical) follow at residues 15-37, 58-80, 95-116, and 123-145; these read DFSF…ALIT, FAAM…WLWG, LGAL…FAFT, and LVIS…FVPH.

Its subcellular location is the cell membrane. This is an uncharacterized protein from Archaeoglobus fulgidus (strain ATCC 49558 / DSM 4304 / JCM 9628 / NBRC 100126 / VC-16).